Reading from the N-terminus, the 430-residue chain is Trigger factor (430 aa).

Positions 157–242 (GDLVALETWS…AVEVSEPVLP (86 aa)) constitute a PPIase FKBP-type domain.

This sequence belongs to the FKBP-type PPIase family. Tig subfamily.

The protein localises to the cytoplasm. It carries out the reaction [protein]-peptidylproline (omega=180) = [protein]-peptidylproline (omega=0). Functionally, involved in protein export. Acts as a chaperone by maintaining the newly synthesized protein in an open conformation. Functions as a peptidyl-prolyl cis-trans isomerase. This Xanthomonas axonopodis pv. citri (strain 306) protein is Trigger factor.